Consider the following 340-residue polypeptide: Phosphatidylglycerol--prolipoprotein diacylglyceryl transferase (340 aa).

Helical transmembrane passes span 19–39 (IPLRGYAFCIIIGVFVAVWLG), 54–74 (ADIAVWAVPFGLVGGRLYHVI), 93–113 (IWEGGLGIWGAIALGAVGAWI), and 119–139 (GIPLPAWADAVAPGIAFAQAF). An a 1,2-diacyl-sn-glycero-3-phospho-(1'-sn-glycerol)-binding site is contributed by R141. 3 helical membrane-spanning segments follow: residues 176 to 196 (HPTFLYESLWCVGVGFLVIWA), 202 to 221 (LGHGRAFALYVAAYCVGRAW), and 238 to 258 (LNDWTAIAVFLLAVLYIVLSS). The disordered stretch occupies residues 266–340 (EIVEPGASDT…ESAAESAKKV (75 aa)). Residues 284–294 (DLGKDEDKATT) show a composition bias toward basic and acidic residues. Positions 295-307 (DKATATDTSTTTD) are enriched in low complexity. The span at 326–340 (PSEKTESAAESAKKV) shows a compositional bias: basic and acidic residues.

Belongs to the Lgt family.

It is found in the cell membrane. It catalyses the reaction L-cysteinyl-[prolipoprotein] + a 1,2-diacyl-sn-glycero-3-phospho-(1'-sn-glycerol) = an S-1,2-diacyl-sn-glyceryl-L-cysteinyl-[prolipoprotein] + sn-glycerol 1-phosphate + H(+). It functions in the pathway protein modification; lipoprotein biosynthesis (diacylglyceryl transfer). In terms of biological role, catalyzes the transfer of the diacylglyceryl group from phosphatidylglycerol to the sulfhydryl group of the N-terminal cysteine of a prolipoprotein, the first step in the formation of mature lipoproteins. The sequence is that of Phosphatidylglycerol--prolipoprotein diacylglyceryl transferase from Streptomyces avermitilis (strain ATCC 31267 / DSM 46492 / JCM 5070 / NBRC 14893 / NCIMB 12804 / NRRL 8165 / MA-4680).